Reading from the N-terminus, the 174-residue chain is Large ribosomal subunit protein uL18 (174 aa).

It belongs to the universal ribosomal protein uL18 family. In terms of assembly, part of the 50S ribosomal subunit. Contacts the 5S and 23S rRNAs.

Its function is as follows. This is one of the proteins that bind and probably mediate the attachment of the 5S RNA into the large ribosomal subunit, where it forms part of the central protuberance. The protein is Large ribosomal subunit protein uL18 of Methanosarcina acetivorans (strain ATCC 35395 / DSM 2834 / JCM 12185 / C2A).